The sequence spans 145 residues: Aegerolysin Aa-Pri1 (145 aa).

Positions 1–8 (MDSNKDER) are excised as a propeptide.

This sequence belongs to the aegerolysin family.

This chain is Aegerolysin Aa-Pri1 (AA-PRI1), found in Cyclocybe aegerita (Black poplar mushroom).